Consider the following 356-residue polypeptide: Alanine racemase (356 aa).

The active-site Proton acceptor; specific for D-alanine is the K34. K34 is modified (N6-(pyridoxal phosphate)lysine). R129 provides a ligand contact to substrate. Y253 (proton acceptor; specific for L-alanine) is an active-site residue. A substrate-binding site is contributed by M301.

The protein belongs to the alanine racemase family. Pyridoxal 5'-phosphate is required as a cofactor.

It carries out the reaction L-alanine = D-alanine. Its pathway is amino-acid biosynthesis; D-alanine biosynthesis; D-alanine from L-alanine: step 1/1. In terms of biological role, catalyzes the interconversion of L-alanine and D-alanine. May also act on other amino acids. This Nitrosococcus oceani (strain ATCC 19707 / BCRC 17464 / JCM 30415 / NCIMB 11848 / C-107) protein is Alanine racemase (alr).